A 311-amino-acid chain; its full sequence is Malate dehydrogenase (311 aa).

NAD(+) contacts are provided by residues glycine 7–glycine 13 and aspartate 34. Positions 81 and 87 each coordinate substrate. Residues asparagine 94 and isoleucine 117–asparagine 119 each bind NAD(+). Substrate contacts are provided by asparagine 119 and arginine 153. Residue histidine 177 is the Proton acceptor of the active site. An NAD(+)-binding site is contributed by methionine 227.

The protein belongs to the LDH/MDH superfamily. MDH type 1 family. Homodimer.

The enzyme catalyses (S)-malate + NAD(+) = oxaloacetate + NADH + H(+). Catalyzes the reversible oxidation of malate to oxaloacetate. This is Malate dehydrogenase from Shewanella amazonensis (strain ATCC BAA-1098 / SB2B).